An 86-amino-acid chain; its full sequence is Small ribosomal subunit protein uS17 (86 aa).

Belongs to the universal ribosomal protein uS17 family. In terms of assembly, part of the 30S ribosomal subunit.

Its function is as follows. One of the primary rRNA binding proteins, it binds specifically to the 5'-end of 16S ribosomal RNA. This Streptococcus mutans serotype c (strain ATCC 700610 / UA159) protein is Small ribosomal subunit protein uS17.